The following is a 135-amino-acid chain: Transcription antitermination protein NusB (135 aa).

The protein belongs to the NusB family.

Functionally, involved in transcription antitermination. Required for transcription of ribosomal RNA (rRNA) genes. Binds specifically to the boxA antiterminator sequence of the ribosomal RNA (rrn) operons. This is Transcription antitermination protein NusB from Nocardioides sp. (strain ATCC BAA-499 / JS614).